A 135-amino-acid polypeptide reads, in one-letter code: Large ribosomal subunit protein uL16c (135 aa).

Belongs to the universal ribosomal protein uL16 family. In terms of assembly, part of the 50S ribosomal subunit.

It localises to the plastid. It is found in the chloroplast. The polypeptide is Large ribosomal subunit protein uL16c (Vitis vinifera (Grape)).